We begin with the raw amino-acid sequence, 451 residues long: MQRHAIVLAAGKGTRMKSKKYKVLHDVAGKTMIEHVADNVKQSGIDQLVTIVGHGADSVKETLGDTSLYSFQEEQLGTAHAVKMASEHLSESQGTTLVVCGDTPLITTATLKSLVEHHENNQAHATVLSATAENPFGYGRILRDSEGRLVSIVEQKDATDAEQQINEISSGIFAFDNQVLFEKLELVKNDNAQSEYYLPDVLSLILEDRGIVEVFHTNDFEEIMGVNDRVMLSEAEKAFRKRINEQHMKNGVTIIDPVTTYIGADVRIGEDTVVEPGVKLSGNSVIGEDTVIGQHTEITNSKIGSNVTIKQSVINEAIVDDYATIGPFAQLRPGADLGKKVKVGNFVEVKKSVVKAGAKLPHLSYIGDAEIGERTNVGCGSITVNYDGINKFKTVIGDDSFIGCNTNLVAPITLGNRSFIAAGSTITDNVPEDSLALARARQTTKEGYLKK.

The tract at residues 1-229 is pyrophosphorylase; sequence MQRHAIVLAA…FEEIMGVNDR (229 aa). Residues 8–11, K22, Q72, and 77–78 each bind UDP-N-acetyl-alpha-D-glucosamine; these read LAAG and GT. D102 is a Mg(2+) binding site. UDP-N-acetyl-alpha-D-glucosamine is bound by residues G139, E154, and N227. N227 is a binding site for Mg(2+). The interval 230 to 250 is linker; it reads VMLSEAEKAFRKRINEQHMKN. Positions 251–451 are N-acetyltransferase; the sequence is GVTIIDPVTT…QTTKEGYLKK (201 aa). UDP-N-acetyl-alpha-D-glucosamine contacts are provided by R332 and K350. Catalysis depends on H362, which acts as the Proton acceptor. UDP-N-acetyl-alpha-D-glucosamine contacts are provided by Y365 and N376. Residues 385–386, A422, and R439 each bind acetyl-CoA; that span reads NY.

It in the N-terminal section; belongs to the N-acetylglucosamine-1-phosphate uridyltransferase family. The protein in the C-terminal section; belongs to the transferase hexapeptide repeat family. As to quaternary structure, homotrimer. Mg(2+) is required as a cofactor.

The protein resides in the cytoplasm. It catalyses the reaction alpha-D-glucosamine 1-phosphate + acetyl-CoA = N-acetyl-alpha-D-glucosamine 1-phosphate + CoA + H(+). It carries out the reaction N-acetyl-alpha-D-glucosamine 1-phosphate + UTP + H(+) = UDP-N-acetyl-alpha-D-glucosamine + diphosphate. It functions in the pathway nucleotide-sugar biosynthesis; UDP-N-acetyl-alpha-D-glucosamine biosynthesis; N-acetyl-alpha-D-glucosamine 1-phosphate from alpha-D-glucosamine 6-phosphate (route II): step 2/2. It participates in nucleotide-sugar biosynthesis; UDP-N-acetyl-alpha-D-glucosamine biosynthesis; UDP-N-acetyl-alpha-D-glucosamine from N-acetyl-alpha-D-glucosamine 1-phosphate: step 1/1. Its pathway is bacterial outer membrane biogenesis; LPS lipid A biosynthesis. In terms of biological role, catalyzes the last two sequential reactions in the de novo biosynthetic pathway for UDP-N-acetylglucosamine (UDP-GlcNAc). The C-terminal domain catalyzes the transfer of acetyl group from acetyl coenzyme A to glucosamine-1-phosphate (GlcN-1-P) to produce N-acetylglucosamine-1-phosphate (GlcNAc-1-P), which is converted into UDP-GlcNAc by the transfer of uridine 5-monophosphate (from uridine 5-triphosphate), a reaction catalyzed by the N-terminal domain. The polypeptide is Bifunctional protein GlmU (Staphylococcus saprophyticus subsp. saprophyticus (strain ATCC 15305 / DSM 20229 / NCIMB 8711 / NCTC 7292 / S-41)).